A 297-amino-acid chain; its full sequence is 32 kDa beta-galactoside-binding lectin lec-3 (297 aa).

2 Galectin domains span residues 11-142 and 151-290; these read YRSK…VQWG and ESGI…IQVV. 224–230 is an a beta-D-galactoside binding site; sequence WGNEERE.

Functionally, binds galactose. This Caenorhabditis elegans protein is 32 kDa beta-galactoside-binding lectin lec-3 (lec-3).